The primary structure comprises 424 residues: Protein ImpB (424 aa).

One can recognise a UmuC domain in the interval 2 to 189; sequence FALADINSFY…QPVGEVWGVG (188 aa).

This sequence belongs to the DNA polymerase type-Y family.

Functionally, involved in UV protection and mutation. The polypeptide is Protein ImpB (impB) (Salmonella typhimurium).